The following is a 20-amino-acid chain: Equinatoxin-1'' (20 aa).

Residues 3–12 form a plays an important role in the hemolytic activity region; the sequence is AVAGAVIEGA. An N-terminal region region spans residues 11 to 20; sequence GATLTFNVLQ.

It belongs to the actinoporin family. Sea anemone subfamily. Octamer or nonamer in membranes. Monomer in the soluble state.

Its subcellular location is the secreted. The protein localises to the nematocyst. It localises to the target cell membrane. Pore-forming protein that forms cations-selective hydrophilic pores of around 1 nm and causes cardiac stimulation and cytolysis. Pore formation is a multi-step process that involves specific recognition of membrane sphingomyelin (but neither cholesterol nor phosphatidylcholine) using aromatic rich region and adjacent phosphocholine (POC) binding site, firm binding to the membrane (mainly driven by hydrophobic interactions) accompanied by the transfer of the N-terminal region to the lipid-water interface and finally pore formation after oligomerization of monomers. Cytolytic effects include red blood cells hemolysis, platelet aggregation and lysis, cytotoxic and cytostatic effects on fibroblasts. Lethality in mammals has been ascribed to severe vasospasm of coronary vessels, cardiac arrhythmia, and inotropic effects. The protein is Equinatoxin-1'' of Actinia equina (Beadlet anemone).